Consider the following 421-residue polypeptide: Alpha-tubulin N-acetyltransferase 1 (421 aa).

An N-acetyltransferase domain is found at 1-190 (MEFPFDVDAL…NNFVIFEGFF (190 aa)). K56 is modified (N6-acetyllysine; by autocatalysis). 124 to 137 (FYIHESVQRHGHGR) provides a ligand contact to acetyl-CoA. An N6-acetyllysine; by autocatalysis modification is found at K146. 160–169 (SQKLLKFLNK) is a binding site for acetyl-CoA. A disordered region spans residues 196–235 (PPAPSLRATRHSRAAAVDPTPAAPARKLPPKRAEGDIKPY). The segment covering 209–221 (AAAVDPTPAAPAR) has biased composition (low complexity). Over residues 226–235 (KRAEGDIKPY) the composition is skewed to basic and acidic residues. N6-acetyllysine; by autocatalysis is present on residues K233 and K244. A disordered region spans residues 252 to 284 (PLNRAPRRATPPAHPPPRSSSLGNSPERGPLRP). 2 positions are modified to phosphoserine: S272 and S276. R305 is subject to Asymmetric dimethylarginine. The tract at residues 306-402 (LLLAADPGGS…PAQSWTVGGD (97 aa)) is disordered. S315 is subject to Phosphoserine. R323 bears the Omega-N-methylarginine mark. The span at 342–354 (VNSSSPNTGNQDS) shows a compositional bias: polar residues. Over residues 355 to 367 (KQGEQETKNRSAS) the composition is skewed to basic and acidic residues.

It belongs to the acetyltransferase ATAT1 family. As to quaternary structure, component of the BBSome complex. Interacts with AP2 alpha-adaptins, including AP2A2, but not with AP1 gamma-adaptin (AP1G1/AP1G2); this interaction is required for efficient alpha-tubulin acetylation, hence clathrin-coated pits are sites of microtubule acetylation. Autoacetylation strongly increases tubulin acetylation.

It localises to the cytoplasm. The protein localises to the membrane. It is found in the clathrin-coated pit. Its subcellular location is the cell junction. The protein resides in the focal adhesion. It localises to the cell projection. The protein localises to the axon. It is found in the cytoskeleton. Its subcellular location is the spindle. The catalysed reaction is L-lysyl-[alpha-tubulin] + acetyl-CoA = N(6)-acetyl-L-lysyl-[alpha-tubulin] + CoA + H(+). In terms of biological role, specifically acetylates 'Lys-40' in alpha-tubulin on the lumenal side of microtubules. Promotes microtubule destabilization and accelerates microtubule dynamics; this activity may be independent of acetylation activity. Acetylates alpha-tubulin with a slow enzymatic rate, due to a catalytic site that is not optimized for acetyl transfer. Enters the microtubule through each end and diffuses quickly throughout the lumen of microtubules. Acetylates only long/old microtubules because of its slow acetylation rate since it does not have time to act on dynamically unstable microtubules before the enzyme is released. Required for normal sperm flagellar function. Promotes directional cell locomotion and chemotaxis, through AP2A2-dependent acetylation of alpha-tubulin at clathrin-coated pits that are concentrated at the leading edge of migrating cells. May facilitate primary cilium assembly. The polypeptide is Alpha-tubulin N-acetyltransferase 1 (Homo sapiens (Human)).